Here is a 590-residue protein sequence, read N- to C-terminus: DEAD-box ATP-dependent RNA helicase 27 (590 aa).

The interval Met1 to Ile92 is disordered. Residues Ser27–Glu62 show a composition bias toward acidic residues. Residues Ala40–Glu87 are a coiled coil. A compositionally biased stretch (basic and acidic residues) spans Glu63–Lys76. The short motif at Met96–Ala124 is the Q motif element. The Helicase ATP-binding domain maps to Ile127–Ser302. Ala140–Thr147 provides a ligand contact to ATP. Residues Asp250 to Asp253 carry the DEAD box motif. The 154-residue stretch at Arg335–Leu488 folds into the Helicase C-terminal domain. The interval Ser551–Phe590 is disordered. Residues Lys579–Phe590 show a composition bias toward basic and acidic residues.

Belongs to the DEAD box helicase family. DDX18/HAS1 subfamily.

It carries out the reaction ATP + H2O = ADP + phosphate + H(+). The protein is DEAD-box ATP-dependent RNA helicase 27 of Oryza sativa subsp. japonica (Rice).